We begin with the raw amino-acid sequence, 280 residues long: Tryptophan synthase alpha chain (280 aa).

Catalysis depends on proton acceptor residues Glu49 and Asp60.

It belongs to the TrpA family. In terms of assembly, tetramer of two alpha and two beta chains.

It carries out the reaction (1S,2R)-1-C-(indol-3-yl)glycerol 3-phosphate + L-serine = D-glyceraldehyde 3-phosphate + L-tryptophan + H2O. Its pathway is amino-acid biosynthesis; L-tryptophan biosynthesis; L-tryptophan from chorismate: step 5/5. Its function is as follows. The alpha subunit is responsible for the aldol cleavage of indoleglycerol phosphate to indole and glyceraldehyde 3-phosphate. The chain is Tryptophan synthase alpha chain from Corynebacterium glutamicum (strain ATCC 13032 / DSM 20300 / JCM 1318 / BCRC 11384 / CCUG 27702 / LMG 3730 / NBRC 12168 / NCIMB 10025 / NRRL B-2784 / 534).